A 248-amino-acid chain; its full sequence is Triosephosphate isomerase (248 aa).

9–11 (NWK) contacts substrate. His94 acts as the Electrophile in catalysis. Glu166 serves as the catalytic Proton acceptor. Substrate is bound by residues Gly172, Ser212, and 233-234 (GG).

This sequence belongs to the triosephosphate isomerase family. In terms of assembly, homodimer.

The protein resides in the cytoplasm. The enzyme catalyses D-glyceraldehyde 3-phosphate = dihydroxyacetone phosphate. It functions in the pathway carbohydrate biosynthesis; gluconeogenesis. It participates in carbohydrate degradation; glycolysis; D-glyceraldehyde 3-phosphate from glycerone phosphate: step 1/1. Functionally, involved in the gluconeogenesis. Catalyzes stereospecifically the conversion of dihydroxyacetone phosphate (DHAP) to D-glyceraldehyde-3-phosphate (G3P). The protein is Triosephosphate isomerase of Clostridium botulinum (strain Langeland / NCTC 10281 / Type F).